The primary structure comprises 397 residues: DNA-directed RNA polymerase subunit Rpo1C (397 aa).

It belongs to the RNA polymerase beta' chain family. In terms of assembly, part of the RNA polymerase complex.

The protein resides in the cytoplasm. It catalyses the reaction RNA(n) + a ribonucleoside 5'-triphosphate = RNA(n+1) + diphosphate. DNA-dependent RNA polymerase (RNAP) catalyzes the transcription of DNA into RNA using the four ribonucleoside triphosphates as substrates. Forms part of the jaw domain. The polypeptide is DNA-directed RNA polymerase subunit Rpo1C (Pyrococcus horikoshii (strain ATCC 700860 / DSM 12428 / JCM 9974 / NBRC 100139 / OT-3)).